Here is a 306-residue protein sequence, read N- to C-terminus: Porphobilinogen deaminase (306 aa).

Residue C237 is modified to S-(dipyrrolylmethanemethyl)cysteine.

Belongs to the HMBS family. As to quaternary structure, monomer. Requires dipyrromethane as cofactor.

It carries out the reaction 4 porphobilinogen + H2O = hydroxymethylbilane + 4 NH4(+). Its pathway is porphyrin-containing compound metabolism; protoporphyrin-IX biosynthesis; coproporphyrinogen-III from 5-aminolevulinate: step 2/4. Its function is as follows. Tetrapolymerization of the monopyrrole PBG into the hydroxymethylbilane pre-uroporphyrinogen in several discrete steps. This is Porphobilinogen deaminase from Syntrophus aciditrophicus (strain SB).